The following is a 272-amino-acid chain: 5'-AMP-activated protein kinase subunit beta-2 (272 aa).

The interval 1–52 (MGNTTSDRVSGERHGAKAARSEGAGGHAPGKEHKIMVGSTDDPSVFSLPDSK) is disordered. Serine 39 is modified (phosphoserine). The residue at position 40 (threonine 40) is a Phosphothreonine. Serine 69 is subject to Phosphoserine; by ULK1. Phosphoserine is present on residues serine 95 and serine 108. Threonine 148 is subject to Phosphothreonine. Phosphoserine is present on residues serine 158, serine 170, serine 174, and serine 184.

It belongs to the 5'-AMP-activated protein kinase beta subunit family. AMPK is a heterotrimer of an alpha catalytic subunit (PRKAA1 or PRKAA2), a beta (PRKAB1 or PRKAB2) and a gamma non-catalytic subunits (PRKAG1, PRKAG2 or PRKAG3). Phosphorylated when associated with the catalytic subunit (PRKAA1 or PRKAA2). Phosphorylated by ULK1 and ULK2; leading to negatively regulate AMPK activity and suggesting the existence of a regulatory feedback loop between ULK1, ULK2 and AMPK.

In terms of biological role, non-catalytic subunit of AMP-activated protein kinase (AMPK), an energy sensor protein kinase that plays a key role in regulating cellular energy metabolism. In response to reduction of intracellular ATP levels, AMPK activates energy-producing pathways and inhibits energy-consuming processes: inhibits protein, carbohydrate and lipid biosynthesis, as well as cell growth and proliferation. AMPK acts via direct phosphorylation of metabolic enzymes, and by longer-term effects via phosphorylation of transcription regulators. Also acts as a regulator of cellular polarity by remodeling the actin cytoskeleton; probably by indirectly activating myosin. Beta non-catalytic subunit acts as a scaffold on which the AMPK complex assembles, via its C-terminus that bridges alpha (PRKAA1 or PRKAA2) and gamma subunits (PRKAG1, PRKAG2 or PRKAG3). This Homo sapiens (Human) protein is 5'-AMP-activated protein kinase subunit beta-2 (PRKAB2).